The sequence spans 668 residues: Type II methyltransferase M.MwoI (668 aa).

The protein belongs to the N(4)/N(6)-methyltransferase family. N(4) subfamily.

It carries out the reaction a 2'-deoxycytidine in DNA + S-adenosyl-L-methionine = an N(4)-methyl-2'-deoxycytidine in DNA + S-adenosyl-L-homocysteine + H(+). Its function is as follows. A beta subtype methylase, recognizes the double-stranded DNA sequence 5'-GCNNNNNNNGC-3', methylates C-2 on both strands, and protects the DNA from cleavage by the MwoI endonuclease. In Methanothermobacter wolfeii (Methanobacterium wolfei), this protein is Type II methyltransferase M.MwoI.